The primary structure comprises 149 residues: Large ribosomal subunit protein bL9 (149 aa).

This sequence belongs to the bacterial ribosomal protein bL9 family.

Functionally, binds to the 23S rRNA. The sequence is that of Large ribosomal subunit protein bL9 from Klebsiella pneumoniae subsp. pneumoniae (strain ATCC 700721 / MGH 78578).